Reading from the N-terminus, the 703-residue chain is Calpain-8 (703 aa).

In terms of domain architecture, Calpain catalytic spans 45–344 (LFKDPEFPAC…FSRLEICNLS (300 aa)). Active-site residues include C105, H262, and N286. Residues 355 to 512 (KWNLVLFNGR…VFSEKKAQAL (158 aa)) form a domain III region. The linker stretch occupies residues 513-531 (EIGDAVPGDPHEPHPRDMD). 4 consecutive EF-hand domains span residues 531 to 566 (DGEDEHFWSLSEEFADKDSEISAHQLKRVLNGLLSK), 575 to 610 (FNINTCREMISLLDGDGTGSLRPVEFKTLWLKICKY), 605 to 640 (LKICKYLEIYQEMDHSRAGTIDAHEMRTALKKAGFT), and 670 to 703 (IRLEILFKLFRLLDKDQNGIVQLSLAEWLCRALV). The interval 532–703 (GEDEHFWSLS…LAEWLCRALV (172 aa)) is domain IV. Ca(2+) is bound by residues D588, D590, T592, S594, E599, D618, S620, T624, and E629.

Belongs to the peptidase C2 family. As to quaternary structure, monomer and homooligomer. Interacts with COPS1/GPS1, COPB1, EYA2, NME2, NME4 and TOMM70. It depends on Ca(2+) as a cofactor. Undergoes autolytic cleavage between Ala-5 and Ala-6 which gives rise to fragments extending from Ala-6 to the C-terminus, Ala-6 to the EF-hand 2 domain and from Ala-6 to the beginning of domain III. Predominantly expressed in the stomach. Localizes strictly to the surface mucus cells in the gastric epithelium and the mucus-secreting goblet cells in the duodenum.

The protein resides in the cytoplasm. It is found in the golgi apparatus. The catalysed reaction is Broad endopeptidase specificity.. With respect to regulation, the concentration of calcium for half-maximal activity is 0.3 mM. Inhibited by calpastatin and calpeptin. Calcium-regulated non-lysosomal thiol-protease. Involved in membrane trafficking in the gastric surface mucus cells (pit cells) and may involve the membrane trafficking of mucus cells via interactions with coat protein. Proteolytically cleaves the beta-subunit of coatomer complex. The protein is Calpain-8 (Capn8) of Mus musculus (Mouse).